Here is a 397-residue protein sequence, read N- to C-terminus: MEIVGCRAEDSSCPFRPPAMLFHGISGGHIQGIMEEMERRSKSEARLAKGAQLNGRDAGMPPLSPEKPALCAGCGGKIADRYYLLAVDKQWHLRCLKCCECKLALESELTCFAKDGSIYCKEDYYRRFSVQRCARCHLGISASEMVMRARDSVYHLSCFTCSTCNKTLTTGDHFGMKDSLVYCRAHFETLLQGEYPPQLSYTELAAKSGGLALPYFNGTGTVQKGRPRKRKSPALGVDIVNYNSGCNENEADHLDRDQQPYPPSQKTKRMRTSFKHHQLRTMKSYFAINHNPDAKDLKQLAQKTGLTKRVLQVWFQNARAKFRRNLLRQENGGVDKADGTSLPAPPSADSGALSPPGTATTLTDLTNPSITVVTAVTSNMDSHESASPSQTTLTNLF.

2 LIM zinc-binding domains span residues 69 to 130 (ALCA…RFSV) and 131 to 193 (QRCA…LLQG). Disordered stretches follow at residues 248–272 (ENEA…RMRT) and 330–364 (ENGG…TLTD). Residues 267–326 (TKRMRTSFKHHQLRTMKSYFAINHNPDAKDLKQLAQKTGLTKRVLQVWFQNARAKFRRNL) constitute a DNA-binding region (homeobox).

Interacts with LDB1 and LDB2.

The protein resides in the nucleus. Functionally, involved in gonadal development. The polypeptide is LIM/homeobox protein Lhx9 (LHX9) (Bos taurus (Bovine)).